A 720-amino-acid chain; its full sequence is MTVSFSMFQIYRLVWLSFMTSMCLSACIHDSVLQETPVVSSNIISSRVPRLFPRSTSSDYFQPLRVTPWYLLGENAFISQGQIRQLKIALQEVTQMLSSTLSVHRSEGSLLLNRDISRFCRSVWRAPNDNKCAYMQTSYQGEKCLDVTIPDFHLQGVKVWSDLEKEPRTVIEDGAGVPDTDFLLYVQVAQTQKCAAQPSVIAYASYCQQDPTGRPLAGVIVFCTDHLREEEYNQRHIIQVALHELLHTLGFSSSLYASWLDCSLAEYGEACSSRTRVTNTDENGQFRIYTPTVMQKMGEHLGVEGVGAPLENKGFPNLASSHWESRFFQGSIMTALLSPPHLTHLDPITLAAFTDMGWYKVNATIKSQLMWGKGAGRYFGLPTTCQDSSTGFFCTGSKLGCHHLHLDKGNCSTDSYLEGCHIYSPLIHGGECWRHQNSGDPDEIFHAQSRCFYSNLTKGASPNQEFRGRCYLHQCLGENHFQVKVHESEWTDCPAGAWIQVAGYEGFIQCPSGCLCLGFQTPHVATLTPTYVTGQITTVKENNVYPTEGIVQFRVQVEVSQRHKWTSEIKSFLLDEVLGVIAQKAGVQRCFLQSHMKEDLDLSFAIVGKWSTDCPPTPEADTAAFSLLTLNQDGAPYIIYNSSYFSTVSIRFIDSDPPALYVSHMLYSYVIGGGCCAVCGAAIIFALFWYKLRRQFLRVGSSYPPETSNHERPQIPADLV.

The signal sequence occupies residues 1–25; the sequence is MTVSFSMFQIYRLVWLSFMTSMCLS. At 26 to 668 the chain is on the extracellular side; the sequence is ACIHDSVLQE…ALYVSHMLYS (643 aa). His243 serves as a coordination point for Zn(2+). Glu244 is an active-site residue. The Zn(2+) site is built by His247 and His322. A helical transmembrane segment spans residues 669-689; the sequence is YVIGGGCCAVCGAAIIFALFW. Residues 690–720 are Cytoplasmic-facing; the sequence is YKLRRQFLRVGSSYPPETSNHERPQIPADLV.

Belongs to the peptidase M8 family. Zn(2+) serves as cofactor.

It is found in the membrane. Its function is as follows. Putative metalloprotease playing a role in the process of LR patterning. The polypeptide is Ciliated left-right organizer metallopeptidase (cirop) (Xenopus laevis (African clawed frog)).